The chain runs to 257 residues: Beta-fibrinogenase mucrofibrase-5 (257 aa).

An N-terminal signal peptide occupies residues 1–18 (MVLIRVLANLLILQLSYA). The propeptide occupies 19–24 (QKSSEL). A Peptidase S1 domain is found at 25–248 (IIGGDECNIN…HLDWIKGIIA (224 aa)). Intrachain disulfides connect C31/C162, C49/C65, C97/C255, C141/C209, C173/C188, and C199/C224. H64 functions as the Charge relay system in the catalytic mechanism. N-linked (GlcNAc...) asparagine glycosylation is present at N102. D109 (charge relay system) is an active-site residue. The Charge relay system role is filled by S203.

This sequence belongs to the peptidase S1 family. Snake venom subfamily. In terms of assembly, monomer. As to expression, expressed by the venom gland.

Its subcellular location is the secreted. In terms of biological role, snake venom serine protease with strong beta-fibrinogenolytic activities, angiotensin I (AGT)-degrading activities and strong kallikrein-like activities in vitro, releasing bradykinin from kininogen (KNG1). Intravenous injection mildly lowers blood pressure in experimental rats, which may be explained by the action on angiotensin I and kininogen. Exhibits amidase activity against N-benzoyl-Pro-Phe-Arg-p-nitroanilide in vitro. The polypeptide is Beta-fibrinogenase mucrofibrase-5 (Protobothrops mucrosquamatus (Taiwan habu)).